A 178-amino-acid polypeptide reads, in one-letter code: Large ribosomal subunit protein uL5 (178 aa).

Belongs to the universal ribosomal protein uL5 family. In terms of assembly, part of the 50S ribosomal subunit; part of the 5S rRNA/L5/L18/L25 subcomplex. Contacts the 5S rRNA and the P site tRNA. Forms a bridge to the 30S subunit in the 70S ribosome.

Its function is as follows. This is one of the proteins that bind and probably mediate the attachment of the 5S RNA into the large ribosomal subunit, where it forms part of the central protuberance. In the 70S ribosome it contacts protein S13 of the 30S subunit (bridge B1b), connecting the 2 subunits; this bridge is implicated in subunit movement. Contacts the P site tRNA; the 5S rRNA and some of its associated proteins might help stabilize positioning of ribosome-bound tRNAs. The chain is Large ribosomal subunit protein uL5 from Prochlorococcus marinus (strain MIT 9515).